The chain runs to 1370 residues: DNA-directed RNA polymerase subunit beta (1370 aa).

This sequence belongs to the RNA polymerase beta chain family. As to quaternary structure, the RNAP catalytic core consists of 2 alpha, 1 beta, 1 beta' and 1 omega subunit. When a sigma factor is associated with the core the holoenzyme is formed, which can initiate transcription.

It carries out the reaction RNA(n) + a ribonucleoside 5'-triphosphate = RNA(n+1) + diphosphate. Functionally, DNA-dependent RNA polymerase catalyzes the transcription of DNA into RNA using the four ribonucleoside triphosphates as substrates. The sequence is that of DNA-directed RNA polymerase subunit beta from Bordetella petrii (strain ATCC BAA-461 / DSM 12804 / CCUG 43448).